The primary structure comprises 28 residues: Dermaseptin-2.2TR (28 aa).

Expressed by the skin glands.

It localises to the secreted. Its function is as follows. Has antimicrobial activity. The polypeptide is Dermaseptin-2.2TR (Phyllomedusa trinitatis (Trinidad leaf frog)).